We begin with the raw amino-acid sequence, 208 residues long: 3-demethoxyubiquinol 3-hydroxylase (208 aa).

Glu57, Glu87, His90, Glu139, Glu171, and His174 together coordinate Fe cation.

The protein belongs to the COQ7 family. Requires Fe cation as cofactor.

It localises to the cell membrane. The enzyme catalyses a 5-methoxy-2-methyl-3-(all-trans-polyprenyl)benzene-1,4-diol + AH2 + O2 = a 3-demethylubiquinol + A + H2O. Its pathway is cofactor biosynthesis; ubiquinone biosynthesis. Catalyzes the hydroxylation of 2-nonaprenyl-3-methyl-6-methoxy-1,4-benzoquinol during ubiquinone biosynthesis. The chain is 3-demethoxyubiquinol 3-hydroxylase from Burkholderia multivorans (strain ATCC 17616 / 249).